The primary structure comprises 429 residues: Histidinol dehydrogenase (429 aa).

NAD(+)-binding residues include tyrosine 131, glutamine 193, and asparagine 216. Residues serine 239, glutamine 261, and histidine 264 each contribute to the substrate site. Zn(2+) contacts are provided by glutamine 261 and histidine 264. Catalysis depends on proton acceptor residues glutamate 327 and histidine 328. Substrate is bound by residues histidine 328, aspartate 361, glutamate 415, and histidine 420. Aspartate 361 lines the Zn(2+) pocket. Histidine 420 is a Zn(2+) binding site.

The protein belongs to the histidinol dehydrogenase family. Zn(2+) serves as cofactor.

The enzyme catalyses L-histidinol + 2 NAD(+) + H2O = L-histidine + 2 NADH + 3 H(+). It functions in the pathway amino-acid biosynthesis; L-histidine biosynthesis; L-histidine from 5-phospho-alpha-D-ribose 1-diphosphate: step 9/9. Functionally, catalyzes the sequential NAD-dependent oxidations of L-histidinol to L-histidinaldehyde and then to L-histidine. This is Histidinol dehydrogenase (hisD) from Methanocaldococcus jannaschii (strain ATCC 43067 / DSM 2661 / JAL-1 / JCM 10045 / NBRC 100440) (Methanococcus jannaschii).